The sequence spans 63 residues: Hyphancin-3G (63 aa).

The first 22 residues, 1 to 22 (MNFSRILFFMFACFVALASVSA), serve as a signal peptide directing secretion. The propeptide at 23 to 26 (VPEP) is removed by a dipeptidylpeptidase. Leu61 is subject to Leucine amide.

It belongs to the cecropin family.

The protein localises to the secreted. In terms of biological role, has antibacterial activity. The polypeptide is Hyphancin-3G (Hyphantria cunea (Fall webworm moth)).